The chain runs to 496 residues: Glycerol kinase (496 aa).

Thr-12 serves as a coordination point for ADP. ATP contacts are provided by Thr-12, Thr-13, and Ser-14. Thr-12 is a binding site for sn-glycerol 3-phosphate. Arg-16 contributes to the ADP binding site. Sn-glycerol 3-phosphate contacts are provided by Arg-82, Glu-83, and Tyr-134. Glycerol-binding residues include Arg-82, Glu-83, and Tyr-134. Phosphohistidine; by HPr is present on His-230. Sn-glycerol 3-phosphate is bound at residue Asp-244. Residues Asp-244 and Gln-245 each contribute to the glycerol site. The ADP site is built by Thr-266 and Gly-309. 4 residues coordinate ATP: Thr-266, Gly-309, Gln-313, and Gly-410. Gly-410 and Asn-414 together coordinate ADP.

This sequence belongs to the FGGY kinase family. As to quaternary structure, homotetramer and homodimer (in equilibrium). In terms of processing, the phosphoenolpyruvate-dependent sugar phosphotransferase system (PTS), including enzyme I, and histidine-containing protein (HPr) are required for the phosphorylation, which leads to the activation of the enzyme.

It carries out the reaction glycerol + ATP = sn-glycerol 3-phosphate + ADP + H(+). It participates in polyol metabolism; glycerol degradation via glycerol kinase pathway; sn-glycerol 3-phosphate from glycerol: step 1/1. Its activity is regulated as follows. Activated by phosphorylation and inhibited by fructose 1,6-bisphosphate (FBP). Functionally, key enzyme in the regulation of glycerol uptake and metabolism. Catalyzes the phosphorylation of glycerol to yield sn-glycerol 3-phosphate. This Geobacillus sp. (strain WCH70) protein is Glycerol kinase.